We begin with the raw amino-acid sequence, 3189 residues long: Beauvericin nonribosomal cyclodepsipeptide synthetase (3189 aa).

Positions 73–466 are condensation 1; sequence HAMYEISQHV…EQLQSAADDA (394 aa). The interval 202-223 is disordered; that stretch reads DSLPLTPDSSGGSDSDSPSTLK. Residues 208-220 show a composition bias toward low complexity; that stretch reads PDSSGGSDSDSPS. The tract at residues 507-901 is adenylation 1; sequence AESPSDPAVL…GRIDSQVKIR (395 aa). A Carrier 1 domain is found at 1036–1112; that stretch reads TLETGPEARL…RLQAVMSGDS (77 aa). Ser-1073 is modified (O-(pantetheine 4'-phosphoryl)serine). A condensation 2 region spans residues 1136 to 1569; sequence SYSQGRLWFL…KSLISVLPLT (434 aa). The adenylation 2 stretch occupies residues 1599 to 2004; it reads FRSQVATCPD…GRMDFQFKIR (406 aa). Residues 2072 to 2211 form an S-adenosyl-L-methionine-dependent N-methyltransferase region; that stretch reads MYNGIDAISP…FPTVEYLTRV (140 aa). Carrier domains are found at residues 2557–2631 and 2654–2728; these read CPIS…REGL and APRN…ELGQ. O-(pantetheine 4'-phosphoryl)serine occurs at positions 2591 and 2688. Positions 2773–3181 are condensation 3; it reads QDVYPATHMQ…AYLMEEVCRL (409 aa).

It belongs to the NRP synthetase family.

It carries out the reaction 3 (R)-2-hydroxy-3-methylbutanoate + 3 L-phenylalanine + 3 S-adenosyl-L-methionine + 6 ATP = beauvericin + 6 AMP + 3 S-adenosyl-L-homocysteine + 6 diphosphate + 6 H(+). Its function is as follows. Beauvericin nonribosomal cyclodepsipeptide synthetase; part of the gene cluster that mediates the biosynthesis of beauvericin (BEA), a non-ribosomal cyclic hexadepsipeptide that shows antibiotic, antifungal, insecticidal, and cancer cell antiproliferative and antihaptotactic activity. Ketoisovalerate reductase BEA2 catalyzes the NADPH-specific reduction of ketoisovaleric acid to hydroxyisovalerate, a precursor for beauvericin biosynthesis. The nonribosomal cyclodepsipeptide synthetase BEA1 then catalyzes the formation of beauvericin via condensation and cyclization of 3 dipeptidol monomers, each composed of one unit of hydroxyisovalerate and one unit of N-methyl-phenylalanine. This is Beauvericin nonribosomal cyclodepsipeptide synthetase (Beas) from Beauveria bassiana (White muscardine disease fungus).